The sequence spans 209 residues: Probable GTP-binding protein EngB (209 aa).

An EngB-type G domain is found at 23–198 (NGAEIAFAGR…EKVVAGWLVP (176 aa)). GTP contacts are provided by residues 31–38 (GRSNAGKS), 58–62 (GRTQL), 76–79 (DLPG), 143–146 (TKSD), and 177–179 (FSS). Residues S38 and T60 each coordinate Mg(2+).

This sequence belongs to the TRAFAC class TrmE-Era-EngA-EngB-Septin-like GTPase superfamily. EngB GTPase family. It depends on Mg(2+) as a cofactor.

Its function is as follows. Necessary for normal cell division and for the maintenance of normal septation. The polypeptide is Probable GTP-binding protein EngB (Azoarcus sp. (strain BH72)).